We begin with the raw amino-acid sequence, 1319 residues long: DNA-directed RNA polymerase subunit beta' (1319 aa).

Zn(2+) contacts are provided by cysteine 59, cysteine 61, cysteine 74, and cysteine 77. Mg(2+) contacts are provided by aspartate 449, aspartate 451, and aspartate 453. 4 residues coordinate Zn(2+): cysteine 773, cysteine 846, cysteine 853, and cysteine 856.

This sequence belongs to the RNA polymerase beta' chain family. In terms of assembly, the RNAP catalytic core consists of 2 alpha, 1 beta, 1 beta' and 1 omega subunit. When a sigma factor is associated with the core the holoenzyme is formed, which can initiate transcription. The cofactor is Mg(2+). Zn(2+) is required as a cofactor.

The catalysed reaction is RNA(n) + a ribonucleoside 5'-triphosphate = RNA(n+1) + diphosphate. In terms of biological role, DNA-dependent RNA polymerase catalyzes the transcription of DNA into RNA using the four ribonucleoside triphosphates as substrates. This chain is DNA-directed RNA polymerase subunit beta', found in Fusobacterium nucleatum subsp. nucleatum (strain ATCC 25586 / DSM 15643 / BCRC 10681 / CIP 101130 / JCM 8532 / KCTC 2640 / LMG 13131 / VPI 4355).